Consider the following 863-residue polypeptide: Alanine--tRNA ligase (863 aa).

Positions 552, 556, 654, and 658 each coordinate Zn(2+).

The protein belongs to the class-II aminoacyl-tRNA synthetase family. Zn(2+) serves as cofactor.

The protein resides in the cytoplasm. It carries out the reaction tRNA(Ala) + L-alanine + ATP = L-alanyl-tRNA(Ala) + AMP + diphosphate. Catalyzes the attachment of alanine to tRNA(Ala) in a two-step reaction: alanine is first activated by ATP to form Ala-AMP and then transferred to the acceptor end of tRNA(Ala). Also edits incorrectly charged Ser-tRNA(Ala) and Gly-tRNA(Ala) via its editing domain. This is Alanine--tRNA ligase from Nitrosomonas eutropha (strain DSM 101675 / C91 / Nm57).